The following is a 275-amino-acid chain: MNTSHYSVLGHTVPYPKVYDPSLLFPISRAVGRTQIGIGVVLPFVGEDRWHAYELSWLDARGKPCVATATFHVPCDSPYLIESKSLKLYLNSFSAEVFNRAEALRLRIAADLSACAGAAVAVEFGLPPVGSGDKEISLDRLNVDIEDYGPPNPDYLSNVAQNLVEEMVEETLTSTLFKSNCPVTGQPDWASVTVRYFGMPIDHEGLLRYFISFRHHAEFHEQCVERIFQDVLQRCAPQCLAVEARYTRRGGLDINPLRTTSEMAWPLSVFRDPRQ.

Residue 81 to 83 (IES) coordinates substrate. 83 to 84 (SK) provides a ligand contact to NADPH. Catalysis depends on Cys181, which acts as the Thioimide intermediate. Residue Asp188 is the Proton donor of the active site. 220–221 (HE) is a substrate binding site. Residue 249–250 (RG) coordinates NADPH.

This sequence belongs to the GTP cyclohydrolase I family. QueF type 2 subfamily. As to quaternary structure, homodimer.

The protein resides in the cytoplasm. It carries out the reaction 7-aminomethyl-7-carbaguanine + 2 NADP(+) = 7-cyano-7-deazaguanine + 2 NADPH + 3 H(+). It functions in the pathway tRNA modification; tRNA-queuosine biosynthesis. Functionally, catalyzes the NADPH-dependent reduction of 7-cyano-7-deazaguanine (preQ0) to 7-aminomethyl-7-deazaguanine (preQ1). This Xylella fastidiosa (strain M23) protein is NADPH-dependent 7-cyano-7-deazaguanine reductase.